A 90-amino-acid polypeptide reads, in one-letter code: MYYRDQYGNVKYAPEGMGPHHAASSSHHSAQHHHMTKENFSMDDVHSWFEKYKMWFLYALILALIFGVFMWWSKYNHDKKRSLNTASIFY.

A disordered region spans residues 13-34 (APEGMGPHHAASSSHHSAQHHH). Residues 52-72 (YKMWFLYALILALIFGVFMWW) form a helical membrane-spanning segment.

Its subcellular location is the host membrane. This is an uncharacterized protein from Invertebrate iridescent virus 3 (IIV-3).